The primary structure comprises 146 residues: Cytochrome c oxidase subunit 5A, mitochondrial (146 aa).

The N-terminal 37 residues, 1–37, are a transit peptide targeting the mitochondrion; sequence MLAAALRRCTAAAAARGLLHPVSAPSPAAAVCSIRCY. The SIFI-degron motif lies at 2 to 16; it reads LAAALRRCTAAAAAR. An N6-acetyllysine mark is found at lysine 83 and lysine 109. Threonine 137 carries the post-translational modification Phosphothreonine.

As to quaternary structure, component of the cytochrome c oxidase (complex IV, CIV), a multisubunit enzyme composed of 14 subunits. The complex is composed of a catalytic core of 3 subunits MT-CO1, MT-CO2 and MT-CO3, encoded in the mitochondrial DNA, and 11 supernumerary subunits COX4I, COX5A, COX5B, COX6A, COX6B, COX6C, COX7A, COX7B, COX7C, COX8 and NDUFA4, which are encoded in the nuclear genome. The complex exists as a monomer or a dimer and forms supercomplexes (SCs) in the inner mitochondrial membrane with NADH-ubiquinone oxidoreductase (complex I, CI) and ubiquinol-cytochrome c oxidoreductase (cytochrome b-c1 complex, complex III, CIII), resulting in different assemblies (supercomplex SCI(1)III(2)IV(1) and megacomplex MCI(2)III(2)IV(2)). Interacts with AFG1L. Interacts with RAB5IF. In terms of processing, in response to mitochondrial stress, the precursor protein is ubiquitinated by the SIFI complex in the cytoplasm before mitochondrial import, leading to its degradation. Within the SIFI complex, UBR4 initiates ubiquitin chain that are further elongated or branched by KCMF1. Expressed in the head of epididymal sperm but not in testicular sperm (at protein level).

The protein resides in the mitochondrion inner membrane. It participates in energy metabolism; oxidative phosphorylation. In terms of biological role, component of the cytochrome c oxidase, the last enzyme in the mitochondrial electron transport chain which drives oxidative phosphorylation. The respiratory chain contains 3 multisubunit complexes succinate dehydrogenase (complex II, CII), ubiquinol-cytochrome c oxidoreductase (cytochrome b-c1 complex, complex III, CIII) and cytochrome c oxidase (complex IV, CIV), that cooperate to transfer electrons derived from NADH and succinate to molecular oxygen, creating an electrochemical gradient over the inner membrane that drives transmembrane transport and the ATP synthase. Cytochrome c oxidase is the component of the respiratory chain that catalyzes the reduction of oxygen to water. Electrons originating from reduced cytochrome c in the intermembrane space (IMS) are transferred via the dinuclear copper A center (CU(A)) of subunit 2 and heme A of subunit 1 to the active site in subunit 1, a binuclear center (BNC) formed by heme A3 and copper B (CU(B)). The BNC reduces molecular oxygen to 2 water molecules using 4 electrons from cytochrome c in the IMS and 4 protons from the mitochondrial matrix. This is Cytochrome c oxidase subunit 5A, mitochondrial (Cox5a) from Rattus norvegicus (Rat).